The chain runs to 471 residues: Sulfate adenylyltransferase subunit 1 (471 aa).

The region spanning 22 to 237 (KELLRFLTCG…LESVQITGAK (216 aa)) is the tr-type G domain. Positions 31–38 (GSVDDGKS) are G1. Residue 31-38 (GSVDDGKS) coordinates GTP. The G2 stretch occupies residues 89-93 (GITID). Positions 110–113 (DTPG) are G3. GTP-binding positions include 110–114 (DTPGH) and 165–168 (NKMD). A G4 region spans residues 165 to 168 (NKMD). The tract at residues 202–204 (SAL) is G5.

It belongs to the TRAFAC class translation factor GTPase superfamily. Classic translation factor GTPase family. CysN/NodQ subfamily. As to quaternary structure, heterodimer composed of CysD, the smaller subunit, and CysN.

The catalysed reaction is sulfate + ATP + H(+) = adenosine 5'-phosphosulfate + diphosphate. Its pathway is sulfur metabolism; hydrogen sulfide biosynthesis; sulfite from sulfate: step 1/3. With CysD forms the ATP sulfurylase (ATPS) that catalyzes the adenylation of sulfate producing adenosine 5'-phosphosulfate (APS) and diphosphate, the first enzymatic step in sulfur assimilation pathway. APS synthesis involves the formation of a high-energy phosphoric-sulfuric acid anhydride bond driven by GTP hydrolysis by CysN coupled to ATP hydrolysis by CysD. The polypeptide is Sulfate adenylyltransferase subunit 1 (Saccharophagus degradans (strain 2-40 / ATCC 43961 / DSM 17024)).